Here is a 187-residue protein sequence, read N- to C-terminus: Methylamine dehydrogenase light chain (187 aa).

Positions 1–57 form a signal peptide, tat-type signal; it reads MKKDTGFDSKIEKLARTTASKTGRRGFIGRLGGFLVGSALLPLLPVDRRSRLGGEVQ. 6 cysteine pairs are disulfide-bonded: Cys79-Cys144, Cys85-Cys117, Cys92-Cys177, Cys94-Cys142, Cys102-Cys133, and Cys134-Cys165. At Trp113 the chain carries Tryptophylquinone. Residues 113–164 constitute a cross-link (tryptophan tryptophylquinone (Trp-Trp)); that stretch reads WVASCYNPGDQQTYLIAYRDCCGKQTCGRCNCVNTQGELPVYRPEFNNDIVW.

It belongs to the aromatic amine dehydrogenase light chain family. As to quaternary structure, heterotetramer of two light and two heavy chains. Tryptophan tryptophylquinone residue is required as a cofactor. In terms of processing, predicted to be exported by the Tat system. The position of the signal peptide cleavage has not been experimentally proven. Post-translationally, tryptophan tryptophylquinone (TTQ) is formed by oxidation of the indole ring of a tryptophan to form tryptophylquinone followed by covalent cross-linking with another tryptophan residue.

The protein localises to the periplasm. The catalysed reaction is 2 oxidized [amicyanin] + methylamine + H2O = 2 reduced [amicyanin] + formaldehyde + NH4(+) + 2 H(+). The protein operates within one-carbon metabolism; methylamine degradation; formaldehyde from methylamine: step 1/1. In terms of biological role, methylamine dehydrogenase carries out the oxidation of methylamine. Electrons are passed from methylamine dehydrogenase to amicyanin. This chain is Methylamine dehydrogenase light chain (mauA), found in Methylophilus methylotrophus (Bacterium W3A1).